The following is a 504-amino-acid chain: Outer capsid protein VP5 (504 aa).

The tract at residues methionine 1–glutamate 42 is involved in membrane permeabilization.

The protein belongs to the orbivirus VP5 family.

Its subcellular location is the virion. Its function is as follows. VP5 protein is one of the two proteins (with VP2) which constitute the virus particle outer capsid. Acts as a membrane permeabilization protein that mediates release of viral particles from endosomal compartments into the cytoplasm. Permeabilization activity is probably negatively regulated by VP2 and is triggered by endosomal degradation of VP2 and exposure to low pH. In African horse sickness virus 6 (AHSV-6), this protein is Outer capsid protein VP5 (Segment-6).